The chain runs to 77 residues: NAD(P)H-quinone oxidoreductase subunit L (77 aa).

The next 2 helical transmembrane spans lie at 12–32 (LIAY…LLFY) and 47–67 (LGIY…SPFL).

This sequence belongs to the complex I NdhL subunit family. As to quaternary structure, NDH-1 can be composed of about 15 different subunits; different subcomplexes with different compositions have been identified which probably have different functions.

Its subcellular location is the cellular thylakoid membrane. The enzyme catalyses a plastoquinone + NADH + (n+1) H(+)(in) = a plastoquinol + NAD(+) + n H(+)(out). It carries out the reaction a plastoquinone + NADPH + (n+1) H(+)(in) = a plastoquinol + NADP(+) + n H(+)(out). Functionally, NDH-1 shuttles electrons from an unknown electron donor, via FMN and iron-sulfur (Fe-S) centers, to quinones in the respiratory and/or the photosynthetic chain. The immediate electron acceptor for the enzyme in this species is believed to be plastoquinone. Couples the redox reaction to proton translocation, and thus conserves the redox energy in a proton gradient. Cyanobacterial NDH-1 also plays a role in inorganic carbon-concentration. In Prochlorococcus marinus (strain MIT 9301), this protein is NAD(P)H-quinone oxidoreductase subunit L.